The sequence spans 117 residues: Large ribosomal subunit protein bL20 (117 aa).

It belongs to the bacterial ribosomal protein bL20 family.

Its function is as follows. Binds directly to 23S ribosomal RNA and is necessary for the in vitro assembly process of the 50S ribosomal subunit. It is not involved in the protein synthesizing functions of that subunit. The protein is Large ribosomal subunit protein bL20 of Finegoldia magna (strain ATCC 29328 / DSM 20472 / WAL 2508) (Peptostreptococcus magnus).